Consider the following 626-residue polypeptide: DNA-directed RNA polymerase subunit gamma (626 aa).

Zn(2+) is bound by residues cysteine 71, cysteine 73, cysteine 86, and cysteine 89. Aspartate 467, aspartate 469, and aspartate 471 together coordinate Mg(2+).

Belongs to the RNA polymerase beta' chain family. RpoC1 subfamily. As to quaternary structure, in cyanobacteria the RNAP catalytic core is composed of 2 alpha, 1 beta, 1 beta', 1 gamma and 1 omega subunit. When a sigma factor is associated with the core the holoenzyme is formed, which can initiate transcription. Requires Mg(2+) as cofactor. Zn(2+) serves as cofactor.

The catalysed reaction is RNA(n) + a ribonucleoside 5'-triphosphate = RNA(n+1) + diphosphate. Functionally, DNA-dependent RNA polymerase catalyzes the transcription of DNA into RNA using the four ribonucleoside triphosphates as substrates. This Microcystis aeruginosa (strain NIES-843 / IAM M-2473) protein is DNA-directed RNA polymerase subunit gamma.